Here is a 350-residue protein sequence, read N- to C-terminus: UDP-glucose 4-epimerase (350 aa).

NAD(+)-binding positions include G13 to I15, D34 to N38, D67 to I68, F89, and K93. S133 to T135 provides a ligand contact to substrate. Y158 acts as the Proton acceptor in catalysis. 2 residues coordinate NAD(+): K162 and Y186. Residues Y186–N188, N207–L209, S225–Y227, R240, and R303–D306 contribute to the substrate site.

This sequence belongs to the NAD(P)-dependent epimerase/dehydratase family. In terms of assembly, homodimer. Requires NAD(+) as cofactor.

It carries out the reaction UDP-alpha-D-glucose = UDP-alpha-D-galactose. It catalyses the reaction UDP-N-acetyl-alpha-D-glucosamine = UDP-N-acetyl-alpha-D-galactosamine. It participates in carbohydrate metabolism; galactose metabolism. Functionally, catalyzes two distinct but analogous reactions: the reversible epimerization of UDP-glucose to UDP-galactose and the reversible epimerization of UDP-N-acetylglucosamine to UDP-N-acetylgalactosamine. The reaction with UDP-Gal plays a critical role in the Leloir pathway of galactose catabolism in which galactose is converted to the glycolytic intermediate glucose 6-phosphate. It contributes to the catabolism of dietary galactose and enables the endogenous biosynthesis of both UDP-Gal and UDP-GalNAc when exogenous sources are limited. Both UDP-sugar interconversions are important in the synthesis of glycoproteins and glycolipids. The chain is UDP-glucose 4-epimerase (Gale) from Drosophila melanogaster (Fruit fly).